We begin with the raw amino-acid sequence, 135 residues long: UPF0102 protein PGN_1801 (135 aa).

The protein belongs to the UPF0102 family.

This Porphyromonas gingivalis (strain ATCC 33277 / DSM 20709 / CIP 103683 / JCM 12257 / NCTC 11834 / 2561) protein is UPF0102 protein PGN_1801.